We begin with the raw amino-acid sequence, 706 residues long: MTEIPSFQPPINATEVEEENAVFPTALTEWFSEVGNQVGEVALKLLSGEGDGMEVTPTPGCTGNGSVCNGTDSGGVVWDIPPLAHYIVGTAVFCIGCCGMFGNAVVVYSFIKSKGLRTPANFFIINLALSDFLMNLTNMPIFAVNSAFQRWLLSDFACELYGFAGGLFGCLSINTLMAISMDRYLVITKPFLVMRIVTKQRVMFAILLLWIWSLVWALPPLFGWSAYVSEGFGTSCTFDYMTPKLSYHIFTYIIFFTMYFIPGGVMIYCYYNIFATVKSGDKQFGKAVKEMAHEDVKNKAQQERQRKNEIKTAKIAFIVISLFMSAWTPYAVVSALGTLGYQDLVTPYLQSIPAMFAKSSAVYSPIVYAITYPKFREAVKKHIPCLSGCLPASEEETKTKTRGQSSASASMSMTQTTAPVHDPQASVDSGSSVSVDDSSGVSRQDTMMVKVEVDKRMEKAGGGAADAAPQEGASVSTVSAQIEVRPSGKVTTKADVISTPQTAHGLSASPVPKVAELGSSATLESAAIPGKIPTPLPSQPIAAPIERHMAAMADEPPPKPRGVATTVNVRRTESGYDRSQDSQRKKVVGDTHRSRSFNTTKDHFASEQPAALIQPKELYSDDTTKKMARQSSEKHEYDNPAFDEGITEVDTDSENETEGSYDMLSVRFQAMAEEPPVETYRKASDLAINLGKASLMLSEAHDETVL.

The Extracellular portion of the chain corresponds to 1–86 (MTEIPSFQPP…VWDIPPLAHY (86 aa)). 3 N-linked (GlcNAc...) asparagine glycosylation sites follow: asparagine 12, asparagine 64, and asparagine 69. A helical transmembrane segment spans residues 87–107 (IVGTAVFCIGCCGMFGNAVVV). Residues 108–121 (YSFIKSKGLRTPAN) are Cytoplasmic-facing. A helical membrane pass occupies residues 122-142 (FFIINLALSDFLMNLTNMPIF). At 143-159 (AVNSAFQRWLLSDFACE) the chain is on the extracellular side. Cysteine 158 and cysteine 236 are joined by a disulfide. A helical membrane pass occupies residues 160-180 (LYGFAGGLFGCLSINTLMAIS). Topologically, residues 181–201 (MDRYLVITKPFLVMRIVTKQR) are cytoplasmic. The helical transmembrane segment at 202–222 (VMFAILLLWIWSLVWALPPLF) threads the bilayer. Topologically, residues 223-248 (GWSAYVSEGFGTSCTFDYMTPKLSYH) are extracellular. A helical transmembrane segment spans residues 249-269 (IFTYIIFFTMYFIPGGVMIYC). Topologically, residues 270–314 (YYNIFATVKSGDKQFGKAVKEMAHEDVKNKAQQERQRKNEIKTAK) are cytoplasmic. A helical membrane pass occupies residues 315–335 (IAFIVISLFMSAWTPYAVVSA). The Extracellular segment spans residues 336–351 (LGTLGYQDLVTPYLQS). A helical transmembrane segment spans residues 352-372 (IPAMFAKSSAVYSPIVYAITY). At lysine 358 the chain carries N6-(retinylidene)lysine. At 373–706 (PKFREAVKKH…LSEAHDETVL (334 aa)) the chain is on the cytoplasmic side. Disordered stretches follow at residues 393–446 (SEEE…RQDT), 571–599 (RTES…SFNT), and 630–658 (QSSE…NETE). Composition is skewed to low complexity over residues 404–418 (QSSA…QTTA) and 426–442 (SVDS…SGVS). Over residues 571-593 (RTESGYDRSQDSQRKKVVGDTHR) the composition is skewed to basic and acidic residues. A compositionally biased stretch (acidic residues) spans 645 to 658 (GITEVDTDSENETE).

This sequence belongs to the G-protein coupled receptor 1 family. Opsin subfamily. As to expression, expressed in Joseph cells and photoreceptor cells of the dorsal ocelli.

The protein resides in the cell membrane. In terms of biological role, photoreceptor implicated in non-image-forming responses to light. Photoisomerizes covalently bound all-trans retinal back to 11-cis retinal. Most likely coupled to the G(q) signaling cascade. In Branchiostoma belcheri (Amphioxus), this protein is Melanopsin.